The following is a 390-amino-acid chain: tRNA(Met) cytidine acetate ligase (390 aa).

ATP contacts are provided by residues 7–20, Gly101, Asn162, and Arg187; that span reads VVEYNPFHNGHKLH.

This sequence belongs to the TmcAL family.

It localises to the cytoplasm. The enzyme catalyses cytidine(34) in elongator tRNA(Met) + acetate + ATP = N(4)-acetylcytidine(34) in elongator tRNA(Met) + AMP + diphosphate. In terms of biological role, catalyzes the formation of N(4)-acetylcytidine (ac(4)C) at the wobble position of elongator tRNA(Met), using acetate and ATP as substrates. First activates an acetate ion to form acetyladenylate (Ac-AMP) and then transfers the acetyl group to tRNA to form ac(4)C34. The protein is tRNA(Met) cytidine acetate ligase of Listeria monocytogenes serotype 4b (strain F2365).